Reading from the N-terminus, the 749-residue chain is Cytosolic phospholipase A2 (749 aa).

A phospholipid binding region spans residues 1 to 178 (MSFIDPYQHI…MKKLLGPKNS (178 aa)). Position 2 is a phosphoserine (Ser-2). Residues 6-122 (PYQHIIVEHQ…KVGEKKEVPF (117 aa)) enclose the C2 domain. Ca(2+)-binding residues include Asp-40, Thr-41, Asp-43, Asn-65, Asp-93, Ala-94, and Asn-95. The 601-residue stretch at 140–740 (SCPDLRFSMA…SNVEARRFFN (601 aa)) folds into the PLA2c domain. Ser-228 (nucleophile) is an active-site residue. Thr-268 bears the Phosphothreonine mark. The disordered stretch occupies residues 409–457 (GSQSRGSTMEEELENITTKHIVSNDSSDSDDESHEPKGTENEDAGSDYQ). 3 positions are modified to phosphoserine: Ser-434, Ser-435, and Ser-437. Residue Ser-505 is modified to Phosphoserine; by MAPK. Ser-515 carries the phosphoserine modification. Residue Lys-541 forms a Glycyl lysine isopeptide (Lys-Gly) (interchain with G-Cter in SUMO2) linkage. Asp-549 serves as the catalytic Proton acceptor. Lys-606 participates in a covalent cross-link: Glycyl lysine isopeptide (Lys-Gly) (interchain with G-Cter in SUMO2). Residues Ser-727 and Ser-729 each carry the phosphoserine modification.

Interacts with KAT5. Phosphorylated at both Ser-505 and Ser-727 in response to mitogenic stimuli. As to expression, expressed in various cells and tissues such as macrophages, neutrophils, fibroblasts and lung endothelium. Expressed in platelets (at protein level).

Its subcellular location is the cytoplasm. It is found in the golgi apparatus membrane. The protein resides in the nucleus envelope. The catalysed reaction is a 1,2-diacyl-sn-glycero-3-phosphocholine + H2O = a 1-acyl-sn-glycero-3-phosphocholine + a fatty acid + H(+). The enzyme catalyses a 1-O-alkyl-2-acyl-sn-glycero-3-phosphocholine + H2O = a 1-O-alkyl-sn-glycero-3-phosphocholine + a fatty acid + H(+). It carries out the reaction a 1-acyl-sn-glycero-3-phosphocholine + H2O = sn-glycerol 3-phosphocholine + a fatty acid + H(+). It catalyses the reaction 1-hexadecanoyl-2-(5Z,8Z,11Z,14Z-eicosatetraenoyl)-sn-glycero-3-phosphocholine + H2O = 1-hexadecanoyl-sn-glycero-3-phosphocholine + (5Z,8Z,11Z,14Z)-eicosatetraenoate + H(+). The catalysed reaction is 1,2-di-(5Z,8Z,11Z,14Z-eicosatetraenoyl)-sn-glycero-3-phosphocholine + H2O = 1-(5Z,8Z,11Z,14Z-eicosatetraenoyl)-sn-glycero-3-phosphocholine + (5Z,8Z,11Z,14Z)-eicosatetraenoate + H(+). The enzyme catalyses 1-octadecanoyl-2-(5Z,8Z,11Z,14Z-eicosatetraenoyl)-sn-glycero-3-phosphocholine + H2O = 1-octadecanoyl-sn-glycero-3-phosphocholine + (5Z,8Z,11Z,14Z)-eicosatetraenoate + H(+). It carries out the reaction 1-hexadecanoyl-2-(9Z,12Z-octadecadienoyl)-sn-glycero-3-phosphocholine + H2O = (9Z,12Z)-octadecadienoate + 1-hexadecanoyl-sn-glycero-3-phosphocholine + H(+). It catalyses the reaction 1-octadecanoyl-2-(9Z,12Z,15Z-octadecatrienoyl)-sn-glycero-3-phosphocholine + H2O = (9Z,12Z,15Z)-octadecatrienoate + 1-octadecanoyl-sn-glycero-3-phosphocholine + H(+). The catalysed reaction is 1-(5Z,8Z,11Z,14Z-eicosatetraenoyl)-2-hexadecanoyl-sn-glycero-3-phosphocholine + H2O = 1-(5Z,8Z,11Z,14Z-eicosatetraenoyl)-sn-glycero-3-phosphocholine + hexadecanoate + H(+). The enzyme catalyses 1-O-hexadecyl-2-(5Z,8Z,11Z,14Z)-eicosatetraenoyl-sn-glycero-3-phosphocholine + H2O = 1-O-hexadecyl-sn-glycero-3-phosphocholine + (5Z,8Z,11Z,14Z)-eicosatetraenoate + H(+). It carries out the reaction 1,2-di-(9Z-octadecenoyl)-sn-glycero-3-phospho-(1'-sn-glycerol) + H2O = 1-(9Z-octadecenoyl)-sn-glycero-3-phospho-(1'-sn-glycerol) + (9Z)-octadecenoate + H(+). It catalyses the reaction 1-octadecanoyl-2-(5Z,8Z,11Z,14Z-eicosatetraenoyl)-sn-glycero-3-phosphate + H2O = 1-octadecanoyl-sn-glycero-3-phosphate + (5Z,8Z,11Z,14Z)-eicosatetraenoate + H(+). The catalysed reaction is 1-hexadecanoyl-sn-glycero-3-phosphocholine + H2O = sn-glycerol 3-phosphocholine + hexadecanoate + H(+). The enzyme catalyses 2-(prostaglandin E2)-sn-glycero-3-phosphoethanolamine + H2O = sn-glycero-3-phosphoethanolamine + prostaglandin E2 + H(+). It carries out the reaction 2-[(15S)-hydroxy-(5Z,8Z,11Z,13E)-eicosatetraenoyl]-sn-glycero-3-phosphocholine + H2O = (15S)-hydroxy-(5Z,8Z,11Z,13E)-eicosatetraenoate + sn-glycerol 3-phosphocholine + H(+). It catalyses the reaction 2-[(15R)-hydroxy-(5Z,8Z,11Z,13E)-eicosatetraenoyl]-sn-glycero-3-phosphocholine + H2O = (15R)-hydroxy-(5Z,8Z,11Z,13E)-eicosatetraenoate + sn-glycerol 3-phosphocholine + H(+). The catalysed reaction is 2-(prostaglandin E2)-sn-glycero-3-phosphocholine + H2O = prostaglandin E2 + sn-glycerol 3-phosphocholine + H(+). The enzyme catalyses 2-[(11R)-hydroxy-(5Z,8Z,12E,14Z)-eicosatetraenoyl]-sn-glycero-3-phosphocholine + H2O = (11R)-hydroxy-(5Z,8Z,12E,14Z)-eicosatetraenoate + sn-glycerol 3-phosphocholine + H(+). It carries out the reaction 1-(5Z,8Z,11Z,14Z-eicosatetraenoyl)-2-O-hexadecyl-sn-glycero-3-phosphocholine + H2O = 2-O-hexadecyl-sn-glycero-3-phosphocholine + (5Z,8Z,11Z,14Z)-eicosatetraenoate + H(+). It catalyses the reaction 1-octadecanoyl-2-(5Z,8Z,11Z,14Z-eicosatetraenoyl)-sn-glycero-3-phosphocholine + glycerol = 1-(5Z,8Z,11Z,14Z-eicosatetraenoyl)-glycerol + 1-octadecanoyl-sn-glycero-3-phosphocholine. The catalysed reaction is 1-octadecanoyl-2-(9Z,12Z,15Z-octadecatrienoyl)-sn-glycero-3-phosphocholine + glycerol = 1-(9Z,12Z,15Z-octadecatrienoyl)-glycerol + 1-octadecanoyl-sn-glycero-3-phosphocholine. It functions in the pathway membrane lipid metabolism; glycerophospholipid metabolism. Its pathway is lipid metabolism; arachidonate metabolism. The protein operates within lipid metabolism; prostaglandin biosynthesis. It participates in lipid metabolism; leukotriene B4 biosynthesis. Activated by cytosolic calcium, which is necessary for binding to membrane lipids. Activated by phosphorylation in response to mitogenic stimuli. Activated by ceramide-1-phosphate. Binding (via C2 domain) to ceramide-1-phosphate increases the affinity for membrane lipids. Can be activated by phosphoinositides in the absence of calcium. Inhibited by ANXA5 in a calcium- and substrate-dependent way. Its function is as follows. Has primarily calcium-dependent phospholipase and lysophospholipase activities, with a major role in membrane lipid remodeling and biosynthesis of lipid mediators of the inflammatory response. Plays an important role in embryo implantation and parturition through its ability to trigger prostanoid production. Preferentially hydrolyzes the ester bond of the fatty acyl group attached at sn-2 position of phospholipids (phospholipase A2 activity). Selectively hydrolyzes sn-2 arachidonoyl group from membrane phospholipids, providing the precursor for eicosanoid biosynthesis via the cyclooxygenase pathway. In an alternative pathway of eicosanoid biosynthesis, hydrolyzes sn-2 fatty acyl chain of eicosanoid lysophopholipids to release free bioactive eicosanoids. Hydrolyzes the ester bond of the fatty acyl group attached at sn-1 position of phospholipids (phospholipase A1 activity) only if an ether linkage rather than an ester linkage is present at the sn-2 position. This hydrolysis is not stereospecific. Has calcium-independent phospholipase A2 and lysophospholipase activities in the presence of phosphoinositides. Has O-acyltransferase activity. Catalyzes the transfer of fatty acyl chains from phospholipids to a primary hydroxyl group of glycerol (sn-1 or sn-3), potentially contributing to monoacylglycerol synthesis. In Homo sapiens (Human), this protein is Cytosolic phospholipase A2 (PLA2G4A).